We begin with the raw amino-acid sequence, 168 residues long: Dual-action ribosomal maturation protein DarP (168 aa).

The protein belongs to the DarP family.

It is found in the cytoplasm. Its function is as follows. Member of a network of 50S ribosomal subunit biogenesis factors which assembles along the 30S-50S interface, preventing incorrect 23S rRNA structures from forming. Promotes peptidyl transferase center (PTC) maturation. This is Dual-action ribosomal maturation protein DarP from Neisseria meningitidis serogroup B (strain ATCC BAA-335 / MC58).